The primary structure comprises 660 residues: Pentatricopeptide repeat-containing protein At4g20090 (660 aa).

PPR repeat units lie at residues 76-110, 111-141, 147-181, 186-220, 221-255, 256-290, 291-325, 326-360, 361-395, 396-430, 431-465, 466-500, 501-535, 539-573, and 574-609; these read GDSTLSSMIESYANSGDFDSVEKLLSRIRLENRVI, IERSFIVVFRAYGKAHLPDKAVDLFHRMVDE, SVKSFNSVLNVIINEGLYHRGLEFYDYVVNSNMNM, NGLSFNLVIKALCKLRFVDRAIEVFRGMPERKCLP, DGYTYCTLMDGLCKEERIDEAVLLLDEMQSEGCSP, SPVIYNVLIDGLCKKGDLTRVTKLVDNMFLKGCVP, NEVTYNTLIHGLCLKGKLDKAVSLLERMVSSKCIP, NDVTYGTLINGLVKQRRATDAVRLLSSMEERGYHL, NQHIYSVLISGLFKEGKAEEAMSLWRKMAEKGCKP, NIVVYSVLVDGLCREGKPNEAKEILNRMIASGCLP, NAYTYSSLMKGFFKTGLCEEAVQVWKEMDKTGCSR, NKFCYSVLIDGLCGVGRVKEAMMVWSKMLTIGIKP, DTVAYSSIIKGLCGIGSMDAALKLYHEMLCQEEPK, DVVTYNILLDGLCMQKDISRAVDLLNSMLDRGCDP, and DVITCNTFLNTLSEKSNSCDKGRSFLEELVVRLLKR.

The protein belongs to the PPR family. P subfamily.

May play a role in embryogenesis. This is Pentatricopeptide repeat-containing protein At4g20090 (EMB1025) from Arabidopsis thaliana (Mouse-ear cress).